Consider the following 655-residue polypeptide: Putative sensor protein Sfri_3689 (655 aa).

The signal sequence occupies residues methionine 1 to alanine 17. Residues phenylalanine 252 to isoleucine 272 traverse the membrane as a helical segment. The region spanning glycine 419–glutamine 653 is the Histidine kinase domain. Histidine 422 is modified (phosphohistidine; by autocatalysis).

The protein resides in the cell membrane. It catalyses the reaction ATP + protein L-histidine = ADP + protein N-phospho-L-histidine.. The chain is Putative sensor protein Sfri_3689 from Shewanella frigidimarina (strain NCIMB 400).